The primary structure comprises 301 residues: MRPALTDYQHLASGKVRELYRIDGGHLLFVATDRISAYDHILKSEIPDKGRVLTAMSVFFFDYLSRTAAVSNHLAGPPDDERIPEEVLGRALVVEQLEMLPVEAVARGYLTGSGLIDYQQTGTVCGIALPSGLVEASRFDEPLFTPATKAELGEHDVNISFDDVVGLIGAERAEELRDRTLRTYSQGAAHALTRGIIVADTKFEFGVDARGELKLADEVFTPDSSRYWRADDYAEGQVQNSFDKQFVRNWLTGPDSGWDRHGDQPPPPLPPDIVDATRARYIEAYERISGLRFDDWIGVSA.

The protein belongs to the SAICAR synthetase family.

The enzyme catalyses 5-amino-1-(5-phospho-D-ribosyl)imidazole-4-carboxylate + L-aspartate + ATP = (2S)-2-[5-amino-1-(5-phospho-beta-D-ribosyl)imidazole-4-carboxamido]succinate + ADP + phosphate + 2 H(+). The protein operates within purine metabolism; IMP biosynthesis via de novo pathway; 5-amino-1-(5-phospho-D-ribosyl)imidazole-4-carboxamide from 5-amino-1-(5-phospho-D-ribosyl)imidazole-4-carboxylate: step 1/2. In Mycolicibacterium vanbaalenii (strain DSM 7251 / JCM 13017 / BCRC 16820 / KCTC 9966 / NRRL B-24157 / PYR-1) (Mycobacterium vanbaalenii), this protein is Phosphoribosylaminoimidazole-succinocarboxamide synthase.